The primary structure comprises 32 residues: C-reactive protein (32 aa).

The Pentraxin (PTX) domain occupies 2–32; that stretch reads VIKTLVFQSESNNSFVELIPMKPLNLRAFXL.

Belongs to the pentraxin family. Homopentamer. Pentraxin (or pentaxin) have a discoid arrangement of 5 non-covalently bound subunits. Glycosylated.

Its subcellular location is the secreted. Its function is as follows. Displays several functions associated with host defense: it promotes agglutination, bacterial capsular swelling, phagocytosis, and complement fixation through its calcium-dependent binding to phosphorylcholine. This is C-reactive protein from Pleuronectes platessa (European plaice).